Here is a 216-residue protein sequence, read N- to C-terminus: Adenylate kinase (216 aa).

Residue 10–15 participates in ATP binding; that stretch reads GAGKGT. The NMP stretch occupies residues 30 to 59; it reads STGDMFRAAMKAETEMGLQAKSFIDKGALV. AMP contacts are provided by residues Thr31, Arg36, 57–59, 85–88, and Gln92; these read ALV and GFPR. Positions 126–163 are LID; that stretch reads GRRICKECGATYHLEFNPPAKADVCDKCGGELYQRSDD. ATP is bound at residue Arg127. Zn(2+) contacts are provided by Cys130 and Cys133. 136-137 provides a ligand contact to ATP; sequence TY. Cys150 and Cys153 together coordinate Zn(2+). Arg160 and Arg171 together coordinate AMP. Gln199 serves as a coordination point for ATP.

This sequence belongs to the adenylate kinase family. As to quaternary structure, monomer.

It is found in the cytoplasm. The catalysed reaction is AMP + ATP = 2 ADP. Its pathway is purine metabolism; AMP biosynthesis via salvage pathway; AMP from ADP: step 1/1. In terms of biological role, catalyzes the reversible transfer of the terminal phosphate group between ATP and AMP. Plays an important role in cellular energy homeostasis and in adenine nucleotide metabolism. This Bacillus cereus (strain B4264) protein is Adenylate kinase.